The primary structure comprises 77 residues: Large ribosomal subunit protein uL24c (77 aa).

It belongs to the universal ribosomal protein uL24 family. Part of the 50S ribosomal subunit.

Its subcellular location is the plastid. It localises to the chloroplast. One of two assembly initiator proteins, it binds directly to the 5'-end of the 23S rRNA, where it nucleates assembly of the 50S subunit. This is Large ribosomal subunit protein uL24c (rpl24) from Trieres chinensis (Marine centric diatom).